Reading from the N-terminus, the 137-residue chain is Bombinin-like peptides 2 (137 aa).

A signal peptide spans 1-18 (MNFKYIVAVSILIASAYA). Asparagine amide is present on Asn-70. The tract at residues 92–112 (DSLEHPEEASEKETRGFNQEE) is disordered. Ile-136 carries the post-translational modification Isoleucine amide.

The protein belongs to the bombinin family. Expressed by the skin glands.

It is found in the secreted. In terms of biological role, bombinin-like peptide 2 has antimicrobial activity, but no hemolytic activity. Preliminary evidence indicates that this peptide does not lyse and thus kill the bacteria by its antimicrobial activity. Its function is as follows. Bombinin H2 has antibacterial and hemolytic activity. This is Bombinin-like peptides 2 from Bombina variegata (Yellow-bellied toad).